A 269-amino-acid polypeptide reads, in one-letter code: Thiazole synthase (269 aa).

K109 (schiff-base intermediate with DXP) is an active-site residue. Residues G170, 196–197 (AG), and 218–219 (NT) each bind 1-deoxy-D-xylulose 5-phosphate.

The protein belongs to the ThiG family. As to quaternary structure, homotetramer. Forms heterodimers with either ThiH or ThiS.

The protein localises to the plastid. Its subcellular location is the chloroplast. The catalysed reaction is [ThiS sulfur-carrier protein]-C-terminal-Gly-aminoethanethioate + 2-iminoacetate + 1-deoxy-D-xylulose 5-phosphate = [ThiS sulfur-carrier protein]-C-terminal Gly-Gly + 2-[(2R,5Z)-2-carboxy-4-methylthiazol-5(2H)-ylidene]ethyl phosphate + 2 H2O + H(+). It participates in cofactor biosynthesis; thiamine diphosphate biosynthesis. Its function is as follows. Catalyzes the rearrangement of 1-deoxy-D-xylulose 5-phosphate (DXP) to produce the thiazole phosphate moiety of thiamine. Sulfur is provided by the thiocarboxylate moiety of the carrier protein ThiS. In vitro, sulfur can be provided by H(2)S. This is Thiazole synthase from Thalassiosira pseudonana (Marine diatom).